The chain runs to 795 residues: Histone acetyltransferase KAT2A (795 aa).

The segment covering 1 to 18 (MADPAAQSSAQPRLQQAQ) has biased composition (polar residues). Residues 1–55 (MADPAAQSSAQPRLQQAQSSGPTGSNSNPGAGSSDPARPGLSQQQWSSQKKAQVR) are disordered. Positions 19-34 (SSGPTGSNSNPGAGSS) are enriched in low complexity. The region spanning 461 to 614 (VIGNSLSQKS…GATLMECELN (154 aa)) is the N-acetyltransferase domain. Catalysis depends on E533, which acts as the Proton donor/acceptor. Acetyl-CoA-binding positions include 537–539 (CAV), 544–550 (QVKGYGT), and Y575. Residues 537-539 (CAV), 544-550 (QVKGYGT), and Y575 contribute to the succinyl-CoA site. Residues 597-606 (LGYIKDYEGA) form a loop 3 region. The Bromo domain maps to 686-790 (KDPDLLYNML…KFFYFKLKEA (105 aa)).

Belongs to the acetyltransferase family. GCN5 subfamily.

It is found in the nucleus. The protein localises to the chromosome. Its subcellular location is the cytoplasm. It localises to the cytoskeleton. The protein resides in the microtubule organizing center. It is found in the centrosome. The catalysed reaction is L-lysyl-[histone] + acetyl-CoA = N(6)-acetyl-L-lysyl-[histone] + CoA + H(+). It carries out the reaction L-lysyl-[protein] + acetyl-CoA = N(6)-acetyl-L-lysyl-[protein] + CoA + H(+). It catalyses the reaction succinyl-CoA + L-lysyl-[protein] = N(6)-succinyl-L-lysyl-[protein] + CoA + H(+). The enzyme catalyses glutaryl-CoA + L-lysyl-[protein] = N(6)-glutaryl-L-lysyl-[protein] + CoA + H(+). Protein lysine acyltransferase that can act as a acetyltransferase, glutaryltransferasesucc, succinyltransferase or malonyltransferase, depending on the context. Acts as a histone lysine succinyltransferase: catalyzes succinylation of histone H3 on 'Lys-79' (H3K79succ), with a maximum frequency around the transcription start sites of genes. Succinylation of histones gives a specific tag for epigenetic transcription activation. Association with the 2-oxoglutarate dehydrogenase complex, which provides succinyl-CoA, is required for histone succinylation. In different complexes, functions either as an acetyltransferase (HAT) or as a succinyltransferase: in the SAGA and ATAC complexes, acts as a histone acetyltransferase. Has significant histone acetyltransferase activity with core histones, but not with nucleosome core particles. Has a a strong preference for acetylation of H3 at 'Lys-9' (H3K9ac). Acetylation of histones gives a specific tag for epigenetic transcription activation. Also acetylates non-histone proteins, such as tbx5. Involved in heart and limb development by mediating acetylation of tbx5. Together with kat2b, required for growth and differentiation of craniofacial cartilage and bone by regulating acetylation of histone H3 at 'Lys-9' (H3K9ac). Also acts as a histone glutaryltransferase: catalyzes glutarylation of histone H4 on 'Lys-91' (H4K91glu), a mark that destabilizes nucleosomes by promoting dissociation of the H2A-H2B dimers from nucleosomes. The sequence is that of Histone acetyltransferase KAT2A from Danio rerio (Zebrafish).